The primary structure comprises 597 residues: Ribosomal oxygenase 1 (597 aa).

M1 carries the post-translational modification N-acetylmethionine. The segment at 1 to 138 (MDELPNGNGA…HVDDPERPWD (138 aa)) is disordered. 2 stretches are compositionally biased toward basic residues: residues 14 to 24 (KRGRGRRRRQP) and 37 to 48 (RPRKVRRHRKSA). Residues 49–62 (ASRVAALRARALLS) are compositionally biased toward low complexity. A phosphoserine mark is found at S62 and S65. The segment covering 72 to 81 (VRGKRERPAE) has biased composition (basic and acidic residues). S86 is subject to Phosphoserine. The region spanning 250–395 (CSLRLLCPQA…DFLEAVLPLA (146 aa)) is the JmjC domain. The Fe cation site is built by H296, D298, and H361.

The protein belongs to the ROX family. NO66 subfamily. Interacts with SP7/OSX; the interaction is direct. Interacts with MYC. Interacts with PHF19; leading to its recruitment to H3K36me3 sites. Fe(2+) is required as a cofactor.

It localises to the nucleus. Its subcellular location is the nucleolus. The protein localises to the nucleoplasm. The catalysed reaction is N(6),N(6)-dimethyl-L-lysyl(36)-[histone H3] + 2 2-oxoglutarate + 2 O2 = L-lysyl(36)-[histone H3] + 2 formaldehyde + 2 succinate + 2 CO2. The enzyme catalyses N(6)-methyl-L-lysyl-[protein] + 2-oxoglutarate + O2 = L-lysyl-[protein] + formaldehyde + succinate + CO2. It carries out the reaction L-histidyl-[protein] + 2-oxoglutarate + O2 = (3S)-3-hydroxy-L-histidyl-[protein] + succinate + CO2. Its function is as follows. Oxygenase that can act as both a histone lysine demethylase and a ribosomal histidine hydroxylase. Specifically demethylates 'Lys-4' (H3K4me) and 'Lys-36' (H3K36me) of histone H3, thereby playing a central role in histone code. Preferentially demethylates trimethylated H3 'Lys-4' (H3K4me3) and monomethylated H3 'Lys-4' (H3K4me1) residues, while it has weaker activity for dimethylated H3 'Lys-36' (H3K36me2). Acts as a regulator of osteoblast differentiation via its interaction with SP7/OSX by demethylating H3K4me and H3K36me, thereby inhibiting SP7/OSX-mediated promoter activation. Also catalyzes demethylation of non-histone proteins, such as CGAS: demethylation of monomethylated CGAS promotes interaction between CGAS and PARP1, followed by PARP1 inactivation. Also catalyzes the hydroxylation of 60S ribosomal protein L8 on 'His-216', thereby playing a role in ribosome biogenesis. Participates in MYC-induced transcriptional activation. The chain is Ribosomal oxygenase 1 from Rattus norvegicus (Rat).